An 858-amino-acid chain; its full sequence is M-phase phosphoprotein 8 (858 aa).

The segment at Val-18–Gly-55 is disordered. 4 positions are modified to phosphoserine: Ser-51, Ser-85, Ser-136, and Ser-138. The Chromo domain maps to Phe-59–Val-118. A histone H3K9me3 binding region spans residues Trp-80–Asp-87. Residues Asn-129–Met-175 form a disordered region. Thr-144 is modified (phosphothreonine). A phosphoserine; by CDK1 mark is found at Ser-149 and Ser-164. Positions Cys-159–Arg-169 are enriched in basic and acidic residues. Ser-188 carries the post-translational modification Phosphoserine. Disordered stretches follow at residues Glu-209 to Ala-234 and Asn-250 to Ala-300. Residues Ser-267, Ser-271, and Ser-278 each carry the phosphoserine modification. A compositionally biased stretch (acidic residues) spans Ile-273–Ile-282. The segment covering Ser-283 to Ala-300 has biased composition (basic and acidic residues). Ser-318 carries the phosphoserine modification. The disordered stretch occupies residues Glu-321–Arg-431. Residues Arg-335 to Ala-357 are compositionally biased toward basic and acidic residues. Thr-385 bears the Phosphothreonine; by CDK1 mark. A phosphoserine mark is found at Ser-392 and Ser-400. A compositionally biased stretch (basic and acidic residues) spans Glu-407–Arg-431. Thr-453 bears the Phosphothreonine mark. ANK repeat units lie at residues Thr-598–Gly-627, Asn-631–Val-660, Asn-664–Ile-693, and His-697–Arg-726.

In terms of assembly, homodimer. Interacts (via chromo domain) with histone H3K9me3. Has the highest affinity for H3K9me3, and lesser affinity for H3K9me2 and H3K9me1. Component of the HUSH complex; at least composed of TASOR, PPHLN1 and MPHOSPH8. Interacts with DNMT3, EHMT1 and SETDB1. Interacts with MORC2; the interaction associateS MORC2 with the HUSH complex which recruits MORC2 to heterochromatic loci. Interacts with ZNF638; leading to recruitment of the HUSH complex to unintegrated retroviral DNA. Interacts with TASOR. Post-translationally, phosphorylated in M (mitotic) phase. Phosphorylation by CDK1 promotes dissociation from chromatin. Expressed in the spermatogonia, spermatocytes and granular cells within the cerebellum.

It is found in the nucleus. The protein localises to the chromosome. Its function is as follows. Heterochromatin component that specifically recognizes and binds methylated 'Lys-9' of histone H3 (H3K9me) and promotes recruitment of proteins that mediate epigenetic repression. Mediates recruitment of the HUSH complex to H3K9me3 sites: the HUSH complex is recruited to genomic loci rich in H3K9me3 and is required to maintain transcriptional silencing by promoting recruitment of SETDB1, a histone methyltransferase that mediates further deposition of H3K9me3, as well as MORC2. Binds H3K9me and promotes DNA methylation by recruiting DNMT3A to target CpG sites; these can be situated within the coding region of the gene. Mediates down-regulation of CDH1 expression. Also represses L1 retrotransposons in collaboration with MORC2 and, probably, SETDB1, the silencing is dependent of repressive epigenetic modifications, such as H3K9me3 mark. Silencing events often occur within introns of transcriptionally active genes, and lead to the down-regulation of host gene expression. The HUSH complex is also involved in the silencing of unintegrated retroviral DNA by being recruited by ZNF638: some part of the retroviral DNA formed immediately after infection remains unintegrated in the host genome and is transcriptionally repressed. In Mus musculus (Mouse), this protein is M-phase phosphoprotein 8.